The chain runs to 854 residues: Nucleolar MIF4G domain-containing protein 1 homolog (854 aa).

Disordered stretches follow at residues 1–38, 55–105, 120–161, and 217–306; these read MAKIKKKEAKAKPLTRKEQRKQKSEFKKQNKRLYFAGK, QSQL…DAEV, PLGK…KQRI, and RKWE…RDAE. A compositionally biased stretch (basic and acidic residues) spans 15-28; it reads TRKEQRKQKSEFKK. Over residues 60 to 71 the composition is skewed to basic residues; sequence KNKKKKRSKKPK. Over residues 88 to 105 the composition is skewed to acidic residues; sequence IDSDDDESIDSDFSDAEV. 2 stretches are compositionally biased toward basic and acidic residues: residues 135–156 and 217–238; these read RQDEEAVRRKELRQQKELESKS and RKWEEKQERKKKLKEQQEKEEA. Acidic residues predominate over residues 242 to 289; sequence SDEEEDKEDRDEPMDNFSEDDSGSEGEDDDEDLTGEEEQSEEDSEQEE. Basic and acidic residues predominate over residues 290-306; the sequence is NAPKIKEDIYGRKRDAE. Positions 352 to 553 constitute an MIF4G domain; the sequence is LKQCKGLLNR…DILNAVKNNN (202 aa). An MI domain is found at 650–764; it reads AERRNIFCII…QLSVLKVVDF (115 aa).

It belongs to the CWC22 family.

It localises to the nucleus. Its subcellular location is the nucleolus. The sequence is that of Nucleolar MIF4G domain-containing protein 1 homolog from Drosophila melanogaster (Fruit fly).